The chain runs to 204 residues: MEHAEHGNSNAPMEYQSETGRLNILGFWIFLGAEIVLFSTLFATFFVLQNRTAGGVLPDELFEVNLVMIMTFLLLISSFTCGIAVHEMRRGSLKGVVIWTIITLLLGAGFVGCEINEFVHYVHEGASLGTSAFWSGFFVLLGTHGTHVTIGIFWIIGILIQLKKRGLTPQTSSKIFISSLYWHFLDVVWIFIFTGVYLMGLGGL.

5 consecutive transmembrane segments (helical) span residues F27 to V47, L66 to H86, G95 to I115, L140 to I160, and F184 to L204.

It belongs to the cytochrome c oxidase subunit 3 family.

It localises to the cell membrane. The catalysed reaction is 2 a quinol + O2 = 2 a quinone + 2 H2O. In terms of biological role, catalyzes quinol oxidation with the concomitant reduction of oxygen to water. Major component for energy conversion during vegetative growth. This Bacillus spizizenii (strain ATCC 23059 / NRRL B-14472 / W23) (Bacillus subtilis subsp. spizizenii) protein is Quinol oxidase subunit 3 (qoxC).